The sequence spans 131 residues: Small ribosomal subunit protein uS8 (131 aa).

It belongs to the universal ribosomal protein uS8 family. As to quaternary structure, part of the 30S ribosomal subunit. Contacts proteins S5 and S12.

In terms of biological role, one of the primary rRNA binding proteins, it binds directly to 16S rRNA central domain where it helps coordinate assembly of the platform of the 30S subunit. In Campylobacter fetus subsp. fetus (strain 82-40), this protein is Small ribosomal subunit protein uS8.